The sequence spans 341 residues: Major histocompatibility complex class I-related protein 1 (341 aa).

An N-terminal signal peptide occupies residues 1–22 (MGELMAFLLPLIIVLMVKHSDS). Positions 23–109 (RTHSLRYFRL…KRLQRHYNHS (87 aa)) are alpha-1. The antigen-binding cleft stretch occupies residues 23–201 (RTHSLRYFRL…EYGKDTLQRT (179 aa)). The Extracellular portion of the chain corresponds to 23 to 302 (RTHSLRYFRL…QESETIPLVM (280 aa)). Arginine 31, serine 46, and lysine 65 together coordinate 5-(2-oxoethylideneamino)-6-(D-ribitylamino)uracil. Positions 31, 46, and 65 each coordinate 5-(2-oxopropylideneamino)-6-(D-ribitylamino)uracil. Residues arginine 31, serine 46, and lysine 65 each contribute to the 7-hydroxy-6-methyl-8-(1-D-ribityl)lumazine site. Arginine 31 contacts 8-(9H-purin-6-yl)-2-oxa-8-azabicyclo[3.3.1]nona-3,6-diene-4,6-dicarbaldehyde. Residues lysine 65 and histidine 80 each coordinate 8-(9H-purin-6-yl)-2-oxa-8-azabicyclo[3.3.1]nona-3,6-diene-4,6-dicarbaldehyde. Lysine 65 contacts 2-amino-4-oxopteridine-6-carbaldehyde. Lysine 65 serves as a coordination point for pyridoxal. Asparagine 107 carries an N-linked (GlcNAc...) asparagine glycan. Positions 110 to 201 (GSHTYQRMIG…EYGKDTLQRT (92 aa)) are alpha-2. Residues arginine 116, tyrosine 174, and glutamine 175 each contribute to the 5-(2-oxoethylideneamino)-6-(D-ribitylamino)uracil site. Arginine 116, tyrosine 174, and glutamine 175 together coordinate 5-(2-oxopropylideneamino)-6-(D-ribitylamino)uracil. 7-hydroxy-6-methyl-8-(1-D-ribityl)lumazine contacts are provided by arginine 116, tyrosine 174, and glutamine 175. Arginine 116 is a binding site for 8-(9H-purin-6-yl)-2-oxa-8-azabicyclo[3.3.1]nona-3,6-diene-4,6-dicarbaldehyde. Cystine bridges form between cysteine 120-cysteine 183 and cysteine 222-cysteine 278. Residues 202–293 (EPPLVRVNRK…GVHMVLQVPQ (92 aa)) form an alpha-3 region. The Ig-like C1-type domain maps to 203–299 (PPLVRVNRKE…QVPQESETIP (97 aa)). A connecting peptide region spans residues 294 to 302 (ESETIPLVM). The chain crosses the membrane as a helical span at residues 303–323 (KAVSGSIVLVIVLAGVGVLVW). The Cytoplasmic portion of the chain corresponds to 324–341 (RRRPREQNGAIYLPTPDR).

The protein belongs to the MHC class I family. Heterotrimer that consists of MR1, B2M and a metabolite antigen. Major classes of metabolite ligands presented by MR1 include riboflavin-related antigens, pyrimidines and ribityl lumazines, nucleobase adducts and folate derivatives. Forms reversible covalent Schiff base complexes with microbial pyrimidine-based metabolite, which serves as a molecular switch triggering complete folding, stable association with B2M and translocation of the ternary complex from endoplasmic reticulum to the plasma membrane. Alternatively, forms non-Schiff base complexes with ribityl lumazines. On antigen-presenting cells, the ternary complex interacts with TCR on MR1-restricted T cells, predominantly represented by CD8-positive and CD4- and CD8-double negative MAIT cell subsets. Interacts with TAPBP and TAPBPL chaperones in the endoplasmic reticulum. TAPBP associated or not with MHC class I peptide loading complex binds ligand-free MR1 or MR1-B2M complex, providing for stable MR1 pools ready for metabolite antigen processing. TAPBPL interacts with MR1 in a ligand-independent way; this interaction may stabilize MR1 pool and facilitate ligand loading and dissociation. MR1-B2M heterodimer adopts a topology similar to classical MHC class I molecules, with alpha-1 and alpha-2 domains of MR1 forming the antigen-binding cleft composed of two alpha-helices resting on a floor of 7-stranded anti-parallel beta-pleated sheet. The ribityl moiety of pyrimidine-based antigens is recognized by Tyr-95 residue in the CDR3 alpha loop of the invariant TRAV1-2 TCR. In terms of assembly, homodimerizes and does not associate with B2M. In terms of processing, N-glycosylated. Ubiquitous. Low expression is detected in peripheral blood B cells, T cells, monocytes and in bronchial epithelial cells (at protein level). Expressed in plasmablasts or plasma B cells in the lamina propria of ileum, appendix and colon (at protein level). Highly expressed on a subset of CD45-positive CD3-positive thymocytes (at protein level).

The protein resides in the cell membrane. It localises to the endoplasmic reticulum membrane. Its subcellular location is the golgi apparatus membrane. It is found in the early endosome membrane. The protein localises to the late endosome membrane. The protein resides in the secreted. Its activity is regulated as follows. Inhibited by pterin-based metabolites such as 6-formylpterin (6-FP, a product of folic acid photodegradation). 6-FP competitively inhibits MAIT cell activation by 5-OP-RU. Modulated by commonly prescribed anti-inflammatory drug metabolites. Inhibited by salicilates such as 3-formylsalicylic and 5-formylsalicylic acids. Activated by diclofenac and/or its hydroxy metabolites. Antigen-presenting molecule specialized in displaying microbial pyrimidine-based metabolites to alpha-beta T cell receptors (TCR) on innate-type mucosal-associated invariant T (MAIT) cells. In complex with B2M preferentially presents riboflavin-derived metabolites to semi-invariant TRAV1.2 TCRs on MAIT cells, guiding immune surveillance of the microbial metabolome at mucosal epithelial barriers. Signature pyrimidine-based microbial antigens are generated via non-enzymatic condensation of metabolite intermediates of the riboflavin pathway with by-products arising from other metabolic pathways such as glycolysis. Typical potent antigenic metabolites are 5-(2-oxoethylideneamino)-6-D-ribitylaminouracil (5-OE-RU) and 5-(2-oxopropylideneamino)-6-D-ribitylaminouracil (5-OP-RU), products of condensation of 5-amino-6-D-ribityaminouracil (5-A-RU) with glyoxal or methylglyoxal by-products, respectively. May present microbial antigens to various TRAV1-2-negative MAIT cell subsets, providing for unique recognition of diverse microbes, including pathogens that do not synthesize riboflavin. Upon antigen recognition, elicits rapid innate-type MAIT cell activation to eliminate pathogenic microbes by directly killing infected cells. During T cell development, drives thymic selection and post-thymic terminal differentiation of MAIT cells in a process dependent on commensal microflora. Acts as an immune sensor of cancer cell metabolome. May present a tumor-specific or -associated metabolite essential for cancer cell survival to a 'pan-cancer' TCR consisting of TRAV38.2-DV8*TRAJ31 alpha chain paired with a TRBV25.1*TRBJ2.3 beta chain on a non-MAIT CD8-positive T cell clone (MC.7.G5), triggering T cell-mediated killing of a wide range of cancer cell types. Functionally, allele MR1*01: Presents microbial-derived metabolite 5-OP-RU to semi-invariant TRAV1.2-TRAJ33-TRBV6.1 (A-F7) TCR on MAIT cells. Presents nucleobase carbonyl adducts generated during oxidative stress. Captures M3Ade, a nucleobase adduct composed of one adenine modified by a malondialdehyde trimer, for recognition by MR1-restricted T cell clones expressing a polyclonal TCR repertoire. Displays moderate binding affinity toward tumor-enriched pyridoxal and pyridoxal 5'-phosphate antigens. Its function is as follows. Allele MR1*04: Presents tumor-enriched metabolite pyridoxal to pan-cancer 7.G5 TCR on T cells enabling preferential recognition of cancer cells. May act as an alloantigen. The protein is Major histocompatibility complex class I-related protein 1 of Homo sapiens (Human).